Here is a 240-residue protein sequence, read N- to C-terminus: 3-deoxy-D-manno-octulosonic acid kinase (240 aa).

D170 is a catalytic residue.

It belongs to the protein kinase superfamily. KdkA/RfaP family.

The protein localises to the cell inner membrane. The enzyme catalyses an alpha-Kdo-(2-&gt;6)-lipid IVA + ATP = a 4-O-phospho-alpha-Kdo-(2-&gt;6)-lipid IVA + ADP + H(+). The protein operates within bacterial outer membrane biogenesis; LPS core biosynthesis. Its function is as follows. Catalyzes the ATP-dependent phosphorylation of the 3-deoxy-D-manno-octulosonic acid (Kdo) residue in Kdo-lipid IV(A) at the 4-OH position. The chain is 3-deoxy-D-manno-octulosonic acid kinase from Mannheimia succiniciproducens (strain KCTC 0769BP / MBEL55E).